The primary structure comprises 370 residues: DNA polymerase IV (370 aa).

In terms of domain architecture, UmuC spans 14 to 198 (IIHIDMDAFF…LPIEKFYGVG (185 aa)). The Mg(2+) site is built by D18 and D116. The active site involves E117.

The protein belongs to the DNA polymerase type-Y family. Monomer. Mg(2+) serves as cofactor.

The protein localises to the cytoplasm. The enzyme catalyses DNA(n) + a 2'-deoxyribonucleoside 5'-triphosphate = DNA(n+1) + diphosphate. In terms of biological role, poorly processive, error-prone DNA polymerase involved in untargeted mutagenesis. Copies undamaged DNA at stalled replication forks, which arise in vivo from mismatched or misaligned primer ends. These misaligned primers can be extended by PolIV. Exhibits no 3'-5' exonuclease (proofreading) activity. May be involved in translesional synthesis, in conjunction with the beta clamp from PolIII. The polypeptide is DNA polymerase IV (Streptococcus mutans serotype c (strain ATCC 700610 / UA159)).